The following is a 163-amino-acid chain: Large ribosomal subunit protein uL10 (163 aa).

Belongs to the universal ribosomal protein uL10 family. In terms of assembly, part of the ribosomal stalk of the 50S ribosomal subunit. The N-terminus interacts with L11 and the large rRNA to form the base of the stalk. The C-terminus forms an elongated spine to which L12 dimers bind in a sequential fashion forming a multimeric L10(L12)X complex.

Functionally, forms part of the ribosomal stalk, playing a central role in the interaction of the ribosome with GTP-bound translation factors. The chain is Large ribosomal subunit protein uL10 from Haemophilus influenzae (strain 86-028NP).